Reading from the N-terminus, the 129-residue chain is Cytochrome c oxidase subunit 5B, mitochondrial (129 aa).

A mitochondrion-targeting transit peptide spans 1 to 31 (MASRLLRGVGALASQALRARGPNGVSVVRSM). 2 positions are modified to N6-acetyllysine: Lys68 and Lys86. Zn(2+) is bound by residues Cys91, Cys93, Cys113, and Cys116. The residue at position 121 (Lys121) is an N6-acetyllysine.

It belongs to the cytochrome c oxidase subunit 5B family. In terms of assembly, component of the cytochrome c oxidase (complex IV, CIV), a multisubunit enzyme composed of 14 subunits. The complex is composed of a catalytic core of 3 subunits MT-CO1, MT-CO2 and MT-CO3, encoded in the mitochondrial DNA, and 11 supernumerary subunits COX4I1 (or COX4I2), COX5A, COX5B, COX6A2 (or COX6A1), COX6B1 (or COX6B2), COX6C, COX7A1 (or COX7A2), COX7B, COX7C, COX8B and NDUFA4, which are encoded in the nuclear genome. The complex exists as a monomer or a dimer and forms supercomplexes (SCs) in the inner mitochondrial membrane with NADH-ubiquinone oxidoreductase (complex I, CI) and ubiquinol-cytochrome c oxidoreductase (cytochrome b-c1 complex, complex III, CIII), resulting in different assemblies (supercomplex SCI(1)III(2)IV(1) and megacomplex MCI(2)III(2)IV(2)).

Its subcellular location is the mitochondrion inner membrane. Its pathway is energy metabolism; oxidative phosphorylation. Component of the cytochrome c oxidase, the last enzyme in the mitochondrial electron transport chain which drives oxidative phosphorylation. The respiratory chain contains 3 multisubunit complexes succinate dehydrogenase (complex II, CII), ubiquinol-cytochrome c oxidoreductase (cytochrome b-c1 complex, complex III, CIII) and cytochrome c oxidase (complex IV, CIV), that cooperate to transfer electrons derived from NADH and succinate to molecular oxygen, creating an electrochemical gradient over the inner membrane that drives transmembrane transport and the ATP synthase. Cytochrome c oxidase is the component of the respiratory chain that catalyzes the reduction of oxygen to water. Electrons originating from reduced cytochrome c in the intermembrane space (IMS) are transferred via the dinuclear copper A center (CU(A)) of subunit 2 and heme A of subunit 1 to the active site in subunit 1, a binuclear center (BNC) formed by heme A3 and copper B (CU(B)). The BNC reduces molecular oxygen to 2 water molecules using 4 electrons from cytochrome c in the IMS and 4 protons from the mitochondrial matrix. In Bos taurus (Bovine), this protein is Cytochrome c oxidase subunit 5B, mitochondrial (COX5B).